Here is a 140-residue protein sequence, read N- to C-terminus: Large ribosomal subunit protein uL11 (140 aa).

This sequence belongs to the universal ribosomal protein uL11 family. In terms of assembly, part of the ribosomal stalk of the 50S ribosomal subunit. Interacts with L10 and the large rRNA to form the base of the stalk. L10 forms an elongated spine to which L12 dimers bind in a sequential fashion forming a multimeric L10(L12)X complex. Post-translationally, one or more lysine residues are methylated.

Its function is as follows. Forms part of the ribosomal stalk which helps the ribosome interact with GTP-bound translation factors. This Dehalococcoides mccartyi (strain ATCC BAA-2266 / KCTC 15142 / 195) (Dehalococcoides ethenogenes (strain 195)) protein is Large ribosomal subunit protein uL11.